A 76-amino-acid chain; its full sequence is MATGTPAHELRELSAEELTTRLHEAKEELFNLRFQNATGQLTNNRRLGTVKRDIARIHTVIRERELGLSSAPGDEA.

This sequence belongs to the universal ribosomal protein uL29 family.

The polypeptide is Large ribosomal subunit protein uL29 (Corynebacterium kroppenstedtii (strain DSM 44385 / JCM 11950 / CIP 105744 / CCUG 35717)).